The primary structure comprises 197 residues: Ribosome maturation factor RimM (197 aa).

One can recognise a PRC barrel domain in the interval 99–174; that stretch reads EDEFYQVDLI…LVVEPVAAGL (76 aa).

The protein belongs to the RimM family. In terms of assembly, binds ribosomal protein uS19.

The protein resides in the cytoplasm. An accessory protein needed during the final step in the assembly of 30S ribosomal subunit, possibly for assembly of the head region. Essential for efficient processing of 16S rRNA. May be needed both before and after RbfA during the maturation of 16S rRNA. It has affinity for free ribosomal 30S subunits but not for 70S ribosomes. This is Ribosome maturation factor RimM from Bartonella quintana (strain Toulouse) (Rochalimaea quintana).